Consider the following 1249-residue polypeptide: DNA-directed RNA polymerase subunit beta (1249 aa).

The protein belongs to the RNA polymerase beta chain family. As to quaternary structure, the RNAP catalytic core consists of 2 alpha, 1 beta, 1 beta' and 1 omega subunit. When a sigma factor is associated with the core the holoenzyme is formed, which can initiate transcription.

The catalysed reaction is RNA(n) + a ribonucleoside 5'-triphosphate = RNA(n+1) + diphosphate. In terms of biological role, DNA-dependent RNA polymerase catalyzes the transcription of DNA into RNA using the four ribonucleoside triphosphates as substrates. In Clostridium botulinum (strain Eklund 17B / Type B), this protein is DNA-directed RNA polymerase subunit beta.